A 1399-amino-acid chain; its full sequence is DNA-directed RNA polymerase subunit beta' (1399 aa).

Zn(2+) is bound by residues C71, C73, C86, and C89. D462, D464, and D466 together coordinate Mg(2+). Zn(2+) contacts are provided by C810, C884, C891, and C894.

Belongs to the RNA polymerase beta' chain family. As to quaternary structure, the RNAP catalytic core consists of 2 alpha, 1 beta, 1 beta' and 1 omega subunit. When a sigma factor is associated with the core the holoenzyme is formed, which can initiate transcription. The cofactor is Mg(2+). It depends on Zn(2+) as a cofactor.

It catalyses the reaction RNA(n) + a ribonucleoside 5'-triphosphate = RNA(n+1) + diphosphate. In terms of biological role, DNA-dependent RNA polymerase catalyzes the transcription of DNA into RNA using the four ribonucleoside triphosphates as substrates. The polypeptide is DNA-directed RNA polymerase subunit beta' (Nitrobacter winogradskyi (strain ATCC 25391 / DSM 10237 / CIP 104748 / NCIMB 11846 / Nb-255)).